The following is a 647-amino-acid chain: Replication protein E1 (647 aa).

Positions 86–88 match the Nuclear localization signal motif; it reads KRK. Disordered regions lie at residues 88–107 and 146–178; these read KFTS…HGSP and QVDG…SIED. A phosphoserine; by host mark is found at Ser92 and Ser106. Residues 149–169 are compositionally biased toward low complexity; sequence GQNGDWQSNSSQSSGVGASNS. The DNA-binding region stretch occupies residues 182 to 348; sequence NSNRTLKSIQ…QTVLQHSFDN (167 aa). In terms of domain architecture, SF3 helicase spans 447-597; sequence IEFTAFLDAF…FPFDENGNPI (151 aa). Position 473–480 (473–480) interacts with ATP; that stretch reads GPANTGKS. Lys554 participates in a covalent cross-link: Glycyl lysine isopeptide (Lys-Gly) (interchain with G-Cter in SUMO).

The protein belongs to the papillomaviridae E1 protein family. In terms of assembly, can form hexamers. Interacts with E2 protein; this interaction increases E1 DNA binding specificity. Interacts with host DNA polymerase subunit POLA2. Interacts with host single stranded DNA-binding protein RPA1. Interacts with host TOP1; this interaction stimulates the enzymatic activity of TOP1. Phosphorylated. Post-translationally, sumoylated.

The protein localises to the host nucleus. It carries out the reaction Couples ATP hydrolysis with the unwinding of duplex DNA by translocating in the 3'-5' direction.. It catalyses the reaction ATP + H2O = ADP + phosphate + H(+). ATP-dependent DNA 3'-5' helicase required for initiation of viral DNA replication. It forms a complex with the viral E2 protein. The E1-E2 complex binds to the replication origin which contains binding sites for both proteins. During the initial step, a dimer of E1 interacts with a dimer of protein E2 leading to a complex that binds the viral origin of replication with high specificity. Then, a second dimer of E1 displaces the E2 dimer in an ATP-dependent manner to form the E1 tetramer. Following this, two E1 monomers are added to each half of the site, which results in the formation of two E1 trimers on the viral ori. Subsequently, two hexamers will be created. The double hexamer acts as a bi-directional helicase machinery and unwinds the viral DNA and then recruits the host DNA polymerase to start replication. The protein is Replication protein E1 of Homo sapiens (Human).